Reading from the N-terminus, the 141-residue chain is Putative antiporter subunit mnhB2 (141 aa).

A run of 4 helical transmembrane segments spans residues 10–30 (TVTKIVVFILLTFGFYLFLAG), 35–55 (GGGFIGGLVFSSAFLLMFLAF), 70–90 (ILMICGSLLSFLTAVVPMFFG), and 116–136 (VFEAGIVLAVVGVVVTVMLSI).

It belongs to the CPA3 antiporters (TC 2.A.63) subunit B family. May form a heterooligomeric complex that consists of seven subunits: mnhA2, mnhB2, mnhC2, mnhD2, mnhE2, mnhF2 and mnhG2.

It localises to the cell membrane. This Staphylococcus saprophyticus subsp. saprophyticus (strain ATCC 15305 / DSM 20229 / NCIMB 8711 / NCTC 7292 / S-41) protein is Putative antiporter subunit mnhB2 (mnhB2).